The primary structure comprises 140 residues: Holo-[acyl-carrier-protein] synthase (140 aa).

Asp-8 and Glu-62 together coordinate Mg(2+).

Belongs to the P-Pant transferase superfamily. AcpS family. The cofactor is Mg(2+).

It localises to the cytoplasm. The enzyme catalyses apo-[ACP] + CoA = holo-[ACP] + adenosine 3',5'-bisphosphate + H(+). In terms of biological role, transfers the 4'-phosphopantetheine moiety from coenzyme A to a Ser of acyl-carrier-protein. The protein is Holo-[acyl-carrier-protein] synthase of Cupriavidus taiwanensis (strain DSM 17343 / BCRC 17206 / CCUG 44338 / CIP 107171 / LMG 19424 / R1) (Ralstonia taiwanensis (strain LMG 19424)).